A 144-amino-acid polypeptide reads, in one-letter code: 6-pyruvoyl tetrahydrobiopterin synthase (144 aa).

Residue Ser-18 is modified to Phosphoserine. His-23 serves as a coordination point for Zn(2+). Position 27 is a phosphoserine (Ser-27). Cys-42 functions as the Proton acceptor in the catalytic mechanism. Zn(2+) is bound by residues His-48 and His-50. The active-site Charge relay system is the His-89. Tyr-127 is modified (phosphotyrosine). The active-site Charge relay system is Glu-133.

This sequence belongs to the PTPS family. In terms of assembly, homodimer. Homohexamer formed of two homotrimers in a head to head fashion. Zn(2+) serves as cofactor. In terms of processing, phosphorylation of Ser-18 is required for maximal enzyme activity.

It carries out the reaction 7,8-dihydroneopterin 3'-triphosphate = 6-pyruvoyl-5,6,7,8-tetrahydropterin + triphosphate + H(+). Its pathway is cofactor biosynthesis; tetrahydrobiopterin biosynthesis; tetrahydrobiopterin from 7,8-dihydroneopterin triphosphate: step 1/3. Involved in the biosynthesis of tetrahydrobiopterin, an essential cofactor of aromatic amino acid hydroxylases. Catalyzes the transformation of 7,8-dihydroneopterin triphosphate into 6-pyruvoyl tetrahydropterin. This Mus musculus (Mouse) protein is 6-pyruvoyl tetrahydrobiopterin synthase.